A 1363-amino-acid chain; its full sequence is DNA-directed RNA polymerase subunit beta (1363 aa).

It belongs to the RNA polymerase beta chain family. The RNAP catalytic core consists of 2 alpha, 1 beta, 1 beta' and 1 omega subunit. When a sigma factor is associated with the core the holoenzyme is formed, which can initiate transcription.

It catalyses the reaction RNA(n) + a ribonucleoside 5'-triphosphate = RNA(n+1) + diphosphate. DNA-dependent RNA polymerase catalyzes the transcription of DNA into RNA using the four ribonucleoside triphosphates as substrates. The polypeptide is DNA-directed RNA polymerase subunit beta (Pelagibacter ubique (strain HTCC1062)).